The following is a 240-amino-acid chain: Purine nucleoside phosphorylase DeoD-type (240 aa).

Histidine 5 contributes to the a purine D-ribonucleoside binding site. Residues glycine 21, arginine 25, arginine 44, and 88-91 (RVGS) each bind phosphate. Residues 180-182 (EME) and 204-205 (SD) contribute to the a purine D-ribonucleoside site. Aspartate 205 serves as the catalytic Proton donor.

This sequence belongs to the PNP/UDP phosphorylase family. In terms of assembly, homohexamer; trimer of homodimers.

The catalysed reaction is a purine D-ribonucleoside + phosphate = a purine nucleobase + alpha-D-ribose 1-phosphate. It carries out the reaction a purine 2'-deoxy-D-ribonucleoside + phosphate = a purine nucleobase + 2-deoxy-alpha-D-ribose 1-phosphate. In terms of biological role, catalyzes the reversible phosphorolytic breakdown of the N-glycosidic bond in the beta-(deoxy)ribonucleoside molecules, with the formation of the corresponding free purine bases and pentose-1-phosphate. This is Purine nucleoside phosphorylase DeoD-type from Actinobacillus pleuropneumoniae serotype 5b (strain L20).